The primary structure comprises 327 residues: Phenylalanine--tRNA ligase alpha subunit (327 aa).

Glutamate 252 is a binding site for Mg(2+).

It belongs to the class-II aminoacyl-tRNA synthetase family. Phe-tRNA synthetase alpha subunit type 1 subfamily. In terms of assembly, tetramer of two alpha and two beta subunits. It depends on Mg(2+) as a cofactor.

It is found in the cytoplasm. The catalysed reaction is tRNA(Phe) + L-phenylalanine + ATP = L-phenylalanyl-tRNA(Phe) + AMP + diphosphate + H(+). In Klebsiella pneumoniae subsp. pneumoniae (strain ATCC 700721 / MGH 78578), this protein is Phenylalanine--tRNA ligase alpha subunit.